We begin with the raw amino-acid sequence, 449 residues long: Ribosomal protein uS12 methylthiotransferase RimO (449 aa).

In terms of domain architecture, MTTase N-terminal spans 7–123 (QKVSMVSLGC…VAEILAEHHA (117 aa)). Residues C16, C52, C86, C161, C165, and C168 each coordinate [4Fe-4S] cluster. The region spanning 147–377 (SSPGWYAYLK…MKTQARVSFR (231 aa)) is the Radical SAM core domain. In terms of domain architecture, TRAM spans 380–448 (RAMVGQTEQV…DYDLVAEMIE (69 aa)).

Belongs to the methylthiotransferase family. RimO subfamily. [4Fe-4S] cluster is required as a cofactor.

The protein resides in the cytoplasm. It carries out the reaction L-aspartate(89)-[ribosomal protein uS12]-hydrogen + (sulfur carrier)-SH + AH2 + 2 S-adenosyl-L-methionine = 3-methylsulfanyl-L-aspartate(89)-[ribosomal protein uS12]-hydrogen + (sulfur carrier)-H + 5'-deoxyadenosine + L-methionine + A + S-adenosyl-L-homocysteine + 2 H(+). In terms of biological role, catalyzes the methylthiolation of an aspartic acid residue of ribosomal protein uS12. In Trichlorobacter lovleyi (strain ATCC BAA-1151 / DSM 17278 / SZ) (Geobacter lovleyi), this protein is Ribosomal protein uS12 methylthiotransferase RimO.